Consider the following 564-residue polypeptide: NADPH oxidase 1 (564 aa).

At 1-9 the chain is on the cytoplasmic side; sequence MGNWVVNHW. Residues 10 to 30 form a helical membrane-spanning segment; that stretch reads FSVLFLVVWLGLNVFLFVDAF. Residues 31–44 lie on the Extracellular side of the membrane; it reads LKYEKADKYYYTRK. Residues 45-72 traverse the membrane as a helical segment; sequence ILGSTLACARASALCLNFNSTLILLPVC. In terms of domain architecture, Ferric oxidoreductase spans 54–283; sequence RASALCLNFN…LAPVILYICE (230 aa). Topologically, residues 73–102 are cytoplasmic; it reads RNLLSFLRGTCSFCSRTLRKQLDHNLTFHK. Residues His-101 and His-115 each coordinate heme. A helical transmembrane segment spans residues 103–123; it reads LVAYMICLHTAIHIIAHLFNF. Residues 124 to 168 are Extracellular-facing; sequence DCYSRSRQATDGSLASILSSLSHDEKKGGSWLNPIQSRNTTVEYV. Asn-162 carries N-linked (GlcNAc...) asparagine glycosylation. A helical membrane pass occupies residues 169–189; it reads TFTSIAGLTGVIMTIALILMV. The Cytoplasmic portion of the chain corresponds to 190 to 206; the sequence is TSATEFIRRSYFEVFWY. A helical transmembrane segment spans residues 207–227; it reads THHLFIFYILGLGIHGIGGIV. 2 residues coordinate heme: His-209 and His-221. Residues 228 to 396 are Extracellular-facing; it reads RGQTEESMNE…TASEDVFQYE (169 aa). Asn-236 carries N-linked (GlcNAc...) asparagine glycosylation. One can recognise an FAD-binding FR-type domain in the interval 284–391; sequence RILRFYRSQQ…DGPFGTASED (108 aa). 338–344 contacts FAD; the sequence is HPFTLTS. The helical transmembrane segment at 397–417 threads the bilayer; the sequence is VAVLVGAGIGVTPFASILKSI. The tract at residues 397–536 is interaction with NOXO1; it reads VAVLVGAGIG…GVFLCGPRTL (140 aa). At 418-564 the chain is on the cytoplasmic side; it reads WYKFQCADHN…VQFYFNKENF (147 aa). Thr-430 carries the post-translational modification Phosphothreonine.

As to quaternary structure, NOX1, NOXA1, NOXO1, RAC1 and CYBA forms a functional multimeric complex supporting reactive oxygen species (ROS) production. Interacts with NOXO1. Interacts (via FAD-binding FR-type domain) with ARHGEF7 (via PH domain). The phosphorylated form at Thr-430 interacts with NOXA1 with greater affinity. FAD is required as a cofactor. Phosphorylation at Thr-430 mediated by PKC/PRKBC positively regulates its interaction with NOXA1 and enzyme activity. Detected in colon, uterus, prostate, and colon carcinoma, but not in peripheral blood leukocytes.

The protein resides in the cell projection. The protein localises to the invadopodium membrane. Its subcellular location is the cell membrane. The catalysed reaction is NADPH + 2 O2 = 2 superoxide + NADP(+) + H(+). With respect to regulation, the oxidase activity is potentiated by NOXA1, NOXO1 and RAC1. Functionally, NADPH oxidase that catalyzes the generation of superoxide from molecular oxygen utilizing NADPH as an electron donor. In Homo sapiens (Human), this protein is NADPH oxidase 1.